The primary structure comprises 180 residues: 2-oxoglutarate dehydrogenase, mitochondrial (180 aa).

Residue Lys14 is modified to N6-succinyllysine. The residue at position 40 (Ser40) is a Phosphoserine. Arg64 is a thiamine diphosphate binding site.

This sequence belongs to the alpha-ketoglutarate dehydrogenase family. In terms of assembly, homodimer. The 2-oxoglutarate dehydrogenase complex is composed of OGDH (2-oxoglutarate dehydrogenase; E1), DLST (dihydrolipoamide succinyltransferase; E2) and DLD (dihydrolipoamide dehydrogenase; E3). It contains multiple copies of the three enzymatic components (E1, E2 and E3). In the nucleus, the 2-oxoglutarate dehydrogenase complex associates with KAT2A. Interacts with ABHD11; this interaction maintains the functional lipoylation of the 2-oxoglutarate dehydrogenase complex. It depends on thiamine diphosphate as a cofactor. The cofactor is Mg(2+).

The protein resides in the mitochondrion matrix. It localises to the nucleus. The enzyme catalyses N(6)-[(R)-lipoyl]-L-lysyl-[protein] + 2-oxoglutarate + H(+) = N(6)-[(R)-S(8)-succinyldihydrolipoyl]-L-lysyl-[protein] + CO2. Its activity is regulated as follows. Calcium ions and ADP stimulate, whereas ATP and NADH reduce catalytic activity. Its function is as follows. 2-oxoglutarate dehydrogenase (E1) component of the 2-oxoglutarate dehydrogenase complex (OGDHC), which mediates the decarboxylation of alpha-ketoglutarate. The 2-oxoglutarate dehydrogenase complex catalyzes the overall conversion of 2-oxoglutarate to succinyl-CoA and CO(2). The 2-oxoglutarate dehydrogenase complex is mainly active in the mitochondrion. A fraction of the 2-oxoglutarate dehydrogenase complex also localizes in the nucleus and is required for lysine succinylation of histones: associates with KAT2A on chromatin and provides succinyl-CoA to histone succinyltransferase KAT2A. In Mesocricetus auratus (Golden hamster), this protein is 2-oxoglutarate dehydrogenase, mitochondrial.